A 395-amino-acid polypeptide reads, in one-letter code: FAD-dependent monooxygenase cctM (395 aa).

A signal peptide spans 1 to 23 (MEPGTDVRRVLVIGAGAAGLLIA). 3 residues coordinate FAD: E37, G52, and R112. N-linked (GlcNAc...) asparagine glycans are attached at residues N138 and N298. FAD is bound at residue D306.

This sequence belongs to the paxM FAD-dependent monooxygenase family. The cofactor is FAD.

The protein operates within mycotoxin biosynthesis. Functionally, FAD-dependent monooxygenase; part of the gene cluster that mediates the biosynthesis of the mycotoxin cyclochlorotine, a hepatotoxic and carcinogenic cyclic chlorinated pentapeptide. The function of cctM within the pathway, if any, remains undetermined. The NRPS cctN initially catalyzes the condensation of L-serine (Ser), Pro, L-2-aminobutyrate (2Abu), Ser, and beta-Phe in this order to produce isocyclotine. After the dichlorination of Pro2 catalyzed by cctP2 to produce isocyclochlorotine, the cctO-mediated transacylation of isocyclochlorotine can furnish cyclochlorotine. The subsequent hydroxylation of cyclochlorotine by cctR yields hydroxycyclochlorotine as the final product. CctP1 probably acts as a phenylalanine aminomutase and provides the uncommon building block beta-Phe. Furthermore, 2Abu can be synthesized from threonine by one of the threonine dehydratases and transaminases localized outside of the cluster. The functions of the remaining proteins encoded by the cluster, cctM and cctT, have not been identified yet. This Talaromyces islandicus (Penicillium islandicum) protein is FAD-dependent monooxygenase cctM.